The sequence spans 254 residues: Fluoride-specific ion channel FluC 1 (254 aa).

Transmembrane regions (helical) follow at residues Leu19 to Tyr39, Ile51 to Val71, and Ala80 to Leu100. The Na(+) site is built by Gly58 and Ser61.

It belongs to the fluoride channel Fluc/FEX (TC 1.A.43) family.

The protein localises to the cell inner membrane. It carries out the reaction fluoride(in) = fluoride(out). With respect to regulation, na(+) is not transported, but it plays an essential structural role and its presence is essential for fluoride channel function. In terms of biological role, fluoride-specific ion channel. Important for reducing fluoride concentration in the cell, thus reducing its toxicity. This chain is Fluoride-specific ion channel FluC 1, found in Brucella suis biovar 1 (strain 1330).